Here is a 177-residue protein sequence, read N- to C-terminus: MKRIVLLRLGHRPERDKRITTHVGLTARMLGAEGMLLASDDSGIVQSLEDVVRRWGGNFYIKNNVSFKQEIRNWKEGGGKVCHLSMYGVNLPDLADELKKCDKLMIVVGAEKVPPEIYQLADWNVAVGSQPHSEVAAVAITMDRIAEGEPLEKEFPGAELTIVPAERGKHVIENAGE.

Residues L84 and 109–113 (GAEKV) each bind S-adenosyl-L-methionine.

It belongs to the aTrm56 family. As to quaternary structure, homodimer.

It is found in the cytoplasm. The enzyme catalyses cytidine(56) in tRNA + S-adenosyl-L-methionine = 2'-O-methylcytidine(56) in tRNA + S-adenosyl-L-homocysteine + H(+). Functionally, specifically catalyzes the AdoMet-dependent 2'-O-ribose methylation of cytidine at position 56 in tRNAs. This chain is tRNA (cytidine(56)-2'-O)-methyltransferase, found in Methanosarcina mazei (strain ATCC BAA-159 / DSM 3647 / Goe1 / Go1 / JCM 11833 / OCM 88) (Methanosarcina frisia).